The following is a 2273-amino-acid chain: Nonribosomal peptide synthetase hasD (2273 aa).

The tract at residues 100–446 is adenylation 1; sequence FHDQLQKHSS…AGLGLALGYF (347 aa). In terms of domain architecture, Carrier 1 spans 588–664; the sequence is ERGLGAVESV…NIAAAVVELS (77 aa). S625 carries the post-translational modification O-(pantetheine 4'-phosphoryl)serine. The segment at 696 to 1120 is condensation 1; it reads IAPMTDMQTR…AAQPDTDLSN (425 aa). Positions 1156–1487 are adenylation 2; the sequence is ENSIQAHPDI…SGVQVTPGYL (332 aa). Residues 1634–1714 enclose the Carrier 2 domain; it reads DLETDTQRVL…DLSLAIDELV (81 aa). At S1673 the chain carries O-(pantetheine 4'-phosphoryl)serine. The tract at residues 1735 to 2127 is condensation 2; the sequence is GQLPLSYLEK…QDLEVDMEYD (393 aa). A disordered region spans residues 2174–2200; that stretch reads PVGLTPSHEGSAELTNGTNKTDSTTGQ. Residues 2186 to 2200 show a composition bias toward polar residues; that stretch reads ELTNGTNKTDSTTGQ. In terms of domain architecture, Carrier 3 spans 2201 to 2273; the sequence is QELENNLTDV…LELATCAVII (73 aa). S2235 is subject to O-(pantetheine 4'-phosphoryl)serine.

This sequence belongs to the NRP synthetase family. Pantetheine 4'-phosphate serves as cofactor.

It functions in the pathway secondary metabolite biosynthesis. Its function is as follows. Nonribosomal peptide synthetase; part of the gene cluster that mediates the biosynthesis of hexadehydro-astechrome (HAS), a tryptophan-derived iron(III)-complex that acts as a virulence factor in infected mice. Within the pathway, the NRPS condenses tryptophan and alanine to produce the Trp-Ala dipeptide. The 7-dimethylallyltryptophan synthase hasE then catalyzes the prenylation of the hasD-tethered tryptophan or the resulting tethered Trp-Ala dipeptide at the C-7 position of the indole moiety. HAS biosynthesis continues via tethered intermediates with the succesive actions of the cytochrome P450 monooxygenase hasH, the O-methyltransferase hasC, and the FAD-linked oxidoreductase hasG. The resulting O-methylated diketopiperazine is then released from hasD. Finally, three O-methylated diketopiperazine molecules assemble in a trimeric complex with Fe(III) to produce hexadehydro-astechrome. The protein is Nonribosomal peptide synthetase hasD of Aspergillus fumigatus (strain CBS 144.89 / FGSC A1163 / CEA10) (Neosartorya fumigata).